The sequence spans 1127 residues: Zinc finger protein basonuclin-2 (1127 aa).

Residues 44 to 67 (SEEAEVDVRERDTQRDREPKRARD) are disordered. Residues 49–67 (VDVRERDTQRDREPKRARD) show a composition bias toward basic and acidic residues. Lys-305 is covalently cross-linked (Glycyl lysine isopeptide (Lys-Gly) (interchain with G-Cter in SUMO2)). Residues 386–450 (STQNEYNESS…DLSKTEHPKS (65 aa)) form a disordered region. The segment covering 389-400 (NEYNESSESEVS) has biased composition (low complexity). Residues 403–422 (PYKSDQTPNRNALTSITNVE) are compositionally biased toward polar residues. Glycyl lysine isopeptide (Lys-Gly) (interchain with G-Cter in SUMO2) cross-links involve residues Lys-424, Lys-444, and Lys-449. The C2H2-type 1 zinc finger occupies 469–492 (VFCNACGKTFYDKGTLKIHYNAVH). The residue at position 589 (Ser-589) is a Phosphoserine. Residue Lys-669 forms a Glycyl lysine isopeptide (Lys-Gly) (interchain with G-Cter in SUMO2) linkage. The disordered stretch occupies residues 675 to 772 (IDTADEFDDE…EESMEGDEHL (98 aa)). The segment covering 676–689 (DTADEFDDEDDDPN) has biased composition (acidic residues). 2 stretches are compositionally biased toward basic and acidic residues: residues 698-708 (MSHDNHCHSQD) and 747-772 (ERDY…DEHL). The segment at 861 to 884 (KICYVCKKSFKSSYSVKLHYRNVH) adopts a C2H2-type 2 zinc-finger fold. Residues Lys-922 and Lys-947 each participate in a glycyl lysine isopeptide (Lys-Gly) (interchain with G-Cter in SUMO2) cross-link. Disordered stretches follow at residues 955–976 (LGLD…HLNG) and 996–1041 (LQSS…TLPG). Positions 1010 to 1023 (AGSDEGILLDDIDG) are enriched in acidic residues. C2H2-type zinc fingers lie at residues 1063-1086 (IMCN…KTVH) and 1091-1118 (HKCK…PNLH). The tract at residues 1107-1127 (SRNRHSQNPNLHKNIPFTSID) is disordered.

Highly expressed in ovary, testis and kidney. Expressed at moderate levels in skin and small intestine, and at lower levels in lung. Trace amounts of expression detected in liver and colon. Not detected in brain, spleen or thymus.

Its subcellular location is the nucleus. Functionally, probable transcription factor specific for skin keratinocytes. May play a role in the differentiation of spermatozoa and oocytes. May also play an important role in early urinary-tract development. This chain is Zinc finger protein basonuclin-2, found in Mus musculus (Mouse).